The primary structure comprises 269 residues: uncharacterized protein (269 aa).

The protein to T.pallidum TP0678.

This is an uncharacterized protein from Borreliella burgdorferi (strain ATCC 35210 / DSM 4680 / CIP 102532 / B31) (Borrelia burgdorferi).